A 149-amino-acid polypeptide reads, in one-letter code: Arginine repressor (149 aa).

This sequence belongs to the ArgR family.

It is found in the cytoplasm. Its pathway is amino-acid biosynthesis; L-arginine biosynthesis [regulation]. Regulates arginine biosynthesis genes. In Exiguobacterium sp. (strain ATCC BAA-1283 / AT1b), this protein is Arginine repressor.